The sequence spans 138 residues: Ribosome-binding factor A (138 aa).

The disordered stretch occupies residues 117–138; it reads ERQNKPAASTEKPPVGSLDADL.

It belongs to the RbfA family. Monomer. Binds 30S ribosomal subunits, but not 50S ribosomal subunits or 70S ribosomes.

Its subcellular location is the cytoplasm. Its function is as follows. One of several proteins that assist in the late maturation steps of the functional core of the 30S ribosomal subunit. Associates with free 30S ribosomal subunits (but not with 30S subunits that are part of 70S ribosomes or polysomes). Required for efficient processing of 16S rRNA. May interact with the 5'-terminal helix region of 16S rRNA. This chain is Ribosome-binding factor A, found in Acaryochloris marina (strain MBIC 11017).